The primary structure comprises 691 residues: Calcium-binding and coiled-coil domain-containing protein 1 (691 aa).

The p300 KIX-binding stretch occupies residues 1–30 (MEESPLSRAPSRGGVNFLNVARTYIPNTKV). The N-terminal AD (CTNNB1 binding site) stretch occupies residues 1–190 (MEESPLSRAP…VQELERALAT (190 aa)). A Phosphoserine modification is found at Ser-4. The interaction with GATA1 stretch occupies residues 45-125 (SDWIGIFKVE…FQFREPRPMD (81 aa)). Coiled-coil stretches lie at residues 145-205 (KATV…YKGI), 232-339 (ELED…AELE), and 417-514 (QSVE…ADEK). Residues 501–691 (RKLEARLEKV…FSTQDPFTFE (191 aa)) form a C-terminal AD (CTNNB1 binding site); interaction with CCAR1 region. The disordered stretch occupies residues 513–604 (EKWNEDATTE…SDSEAEDEKS (92 aa)). The UBZ1-type zinc-finger motif lies at 653–679 (WKECPICKERFPAESDKDALEDHMDGH). Residues Cys-656, Cys-659, His-675, and His-679 each coordinate Zn(2+).

This sequence belongs to the CALCOCO family. As to quaternary structure, part of a calphoglin complex consisting of CALCOCO1, PPA1 and PGM. Interacts with the bHLH-PAS domains of GRIP1, AHR and ARNT. Interacts with CTNNB1 via both its N- and C-terminal regions. Interacts with EP300. Interacts with CCAR1 (via N-terminus) and GATA1.

Its subcellular location is the cytoplasm. The protein resides in the nucleus. In terms of biological role, functions as a coactivator for aryl hydrocarbon and nuclear receptors (NR). Recruited to promoters through its contact with the N-terminal basic helix-loop-helix-Per-Arnt-Sim (PAS) domain of transcription factors or coactivators, such as NCOA2. During ER-activation acts synergistically in combination with other NCOA2-binding proteins, such as EP300, CREBBP and CARM1. Involved in the transcriptional activation of target genes in the Wnt/CTNNB1 pathway. Functions as a secondary coactivator in LEF1-mediated transcriptional activation via its interaction with CTNNB1. Coactivator function for nuclear receptors and LEF1/CTNNB1 involves differential utilization of two different activation regions. In association with CCAR1 enhances GATA1- and MED1-mediated transcriptional activation from the gamma-globin promoter during erythroid differentiation of K562 erythroleukemia cells. Seems to enhance inorganic pyrophosphatase thus activating phosphogluomutase (PMG). Probably functions as a component of the calphoglin complex, which is involved in linking cellular metabolism (phosphate and glucose metabolism) with other core functions including protein synthesis and degradation, calcium signaling and cell growth. The polypeptide is Calcium-binding and coiled-coil domain-containing protein 1 (CALCOCO1) (Pongo abelii (Sumatran orangutan)).